The following is a 311-amino-acid chain: Triacylglycerol lipase (311 aa).

A signal peptide spans 1–26 (MKKKSLLPLGLAIGLASLAASPLIQA). The 246-residue stretch at 35–280 (PIVLAHGMLG…DNYRMNHLDE (246 aa)) folds into the AB hydrolase-1 domain. Position 42 (methionine 42) interacts with substrate. The Nucleophile role is filled by serine 108. Histidine 109 contributes to the substrate binding site. Cysteine 209 and cysteine 261 form a disulfide bridge. Aspartate 235 contacts Ca(2+). Residues aspartate 255 and histidine 277 each act as charge relay system in the active site. Ca(2+)-binding residues include aspartate 279, glutamine 283, and leucine 287.

Belongs to the AB hydrolase superfamily. Pseudomonas lipase family. Monomer. Requires Ca(2+) as cofactor.

It is found in the secreted. The catalysed reaction is a triacylglycerol + H2O = a diacylglycerol + a fatty acid + H(+). With respect to regulation, na(+) increases lipase activity. Inhibited by diethyl p-nitrophenyl phosphate and 3,4-dichloroisocoumarin (DCI). Catalyzes the hydrolysis of triacylglycerol. It also exhibits some esterase activity with p-nitrophenyl acetate and Tween 80 as substrates, however the lipase activity is approximately eight times the esterase activity. It shows a marked specificity for the 1,3-oleyl residues of triolein. In Pseudomonas aeruginosa (strain ATCC 15692 / DSM 22644 / CIP 104116 / JCM 14847 / LMG 12228 / 1C / PRS 101 / PAO1), this protein is Triacylglycerol lipase.